The chain runs to 1016 residues: Primary septum glucan endo-1,3-beta-D-glucosidase (1016 aa).

A signal peptide spans 1–20 (MSSYLRSFIFGLLTISLAQC). Asn37 carries N-linked (GlcNAc...) asparagine glycosylation. Residues 45 to 272 (TNVFDSVVDT…NGYIQIAKIP (228 aa)) are beta-sandwich subdomain. The GH81 domain occupies 45 to 741 (TNVFDSVVDT…AYAAGLWAND (697 aa)). Residues 273 to 364 (LGDGTAEALY…AGNSITFAEA (92 aa)) form an alpha/beta subdomain region. The tract at residues 379–741 (GQIGYSEEAL…AYAAGLWAND (363 aa)) is (alpha/beta)6 barrel subdomain. Residue Asp492 is part of the active site. (1,3-beta-D-glucosyl)n is bound by residues His496, Asp567, Glu569, Glu573, and Tyr650. Residues Glu569 and Glu573 contribute to the active site. The interval 748–1016 (SSSSTTTTST…GCSNGALVAA (269 aa)) is required for catalytic activity against insoluble beta-glucan and to restrict localization of the enzyme to the cell septum. The segment at 844–872 (SSTTSSITPTPTTTSSITPTPTTTSTTTT) is disordered.

It belongs to the glycosyl hydrolase 81 family.

It is found in the cell septum. It catalyses the reaction Hydrolysis of (1-&gt;3)-beta-D-glucosidic linkages in (1-&gt;3)-beta-D-glucans.. In terms of biological role, cleaves internal linkages in 1,3-beta-glucan. Has a role in cell separation where it is required for the degradation of the primary septum after completion of cytokinesis. The polypeptide is Primary septum glucan endo-1,3-beta-D-glucosidase (Schizosaccharomyces pombe (strain 972 / ATCC 24843) (Fission yeast)).